We begin with the raw amino-acid sequence, 553 residues long: Cytokine-like nuclear factor N-PAC (553 aa).

The 59-residue stretch at 8–66 (LGDLVWGKLGRYPPWPGKIVNPPKDLKKPRGKKCFFVKFFGTEDHAWIKVEQLKPYHAH) folds into the PWWP domain. 2 stretches are compositionally biased toward basic and acidic residues: residues 92-145 (RAKG…EGKK) and 162-182 (RAQE…KDLT). A disordered region spans residues 92–188 (RAKGKDQTSS…KDLTIPESST (97 aa)). Ser130 is subject to Phosphoserine. A Glycyl lysine isopeptide (Lys-Gly) (interchain with G-Cter in SUMO2) cross-link involves residue Lys135. Ser167 is subject to Phosphoserine. Residues 168–180 (PRKRGRPPKDEKD) constitute a DNA-binding region (a.T hook). Residues Lys176, Lys179, Lys201, and Lys211 each participate in a glycyl lysine isopeptide (Lys-Gly) (interchain with G-Cter in SUMO2) cross-link. Residues 214-217 (DPHF) form an interaction with histone H3 region. The interaction with KDM1B stretch occupies residues 216–225 (HFHHFLLSQT). Glycyl lysine isopeptide (Lys-Gly) (interchain with G-Cter in SUMO2) cross-links involve residues Lys227, Lys237, Lys240, and Lys269. The interval 261–553 (GSITPTDKKI…MSAVYRAYIH (293 aa)) is dehydrogenase domain. 271-285 (GFLGLGLMGSGIVSN) provides a ligand contact to NAD(+). Lys302 participates in a covalent cross-link: Glycyl lysine isopeptide (Lys-Gly) (interchain with G-Cter in SUMO2). Positions 362 and 505 each coordinate NAD(+). Ser540 carries the phosphoserine modification.

It belongs to the HIBADH-related family. NP60 subfamily. As to quaternary structure, homotetramere. Interacts with MAPK14. Interacts with KDM1B at nucleosomes; this interaction stimulates H3K4me1 and H3K4me2 demethylation. Binds to mononucleosomes. Interacts with GATA4; the interaction is required for a synergistic activation of GATA4 target genes transcription.

The protein resides in the nucleus. The protein localises to the chromosome. Functionally, cytokine-like nuclear factor with chromatin gene reader activity involved in chromatin modification and regulation of gene expression. Acts as a nucleosome-destabilizing factor that is recruited to genes during transcriptional activation. Recognizes and binds histone H3 without a preference for specific epigenetic markers and also binds DNA. Interacts with KDM1B and promotes its histone demethylase activity by facilitating the capture of H3 tails, they form a multifunctional enzyme complex that modifies transcribed chromatin and facilitates Pol II transcription through nucleosomes. Stimulates the acetylation of 'Lys-56' of nucleosomal histone H3 (H3K56ac) by EP300. With GATA4, co-binds a defined set of heart development genes and coregulates their expression during cardiomyocyte differentiation. Regulates p38 MAP kinase activity by mediating stress activation of MAPK14/p38alpha and specifically regulating MAPK14 signaling. Indirectly promotes phosphorylation of MAPK14 and activation of ATF2. The phosphorylation of MAPK14 requires upstream activity of MAP2K4 and MAP2K6. In Pongo abelii (Sumatran orangutan), this protein is Cytokine-like nuclear factor N-PAC (GLYR1).